Reading from the N-terminus, the 355-residue chain is Serum paraoxonase/arylesterase 1 (355 aa).

An intrachain disulfide couples C42 to C353. 2 residues coordinate Ca(2+): E53 and D54. The active-site Proton acceptor is H115. Residues I117, N168, D169, and N224 each coordinate Ca(2+). The N-linked (GlcNAc...) asparagine glycan is linked to N253. The Ca(2+) site is built by D269 and N270. Residues N270 and N324 are each glycosylated (N-linked (GlcNAc...) asparagine).

Belongs to the paraoxonase family. In terms of assembly, homodimer. Interacts with CLU. The cofactor is Ca(2+). In terms of processing, the signal sequence is not cleaved. Plasma, liver, kidney, heart, brain, small intestine and lung. In the plasma, associated with HDL.

The protein localises to the secreted. Its subcellular location is the extracellular space. The enzyme catalyses a phenyl acetate + H2O = a phenol + acetate + H(+). It carries out the reaction An aryl dialkyl phosphate + H2O = dialkyl phosphate + an aryl alcohol.. It catalyses the reaction an N-acyl-L-homoserine lactone + H2O = an N-acyl-L-homoserine + H(+). Functionally, hydrolyzes the toxic metabolites of a variety of organophosphorus insecticides. Capable of hydrolyzing a broad spectrum of organophosphate substrates and lactones, and a number of aromatic carboxylic acid esters. Mediates an enzymatic protection of low density lipoproteins against oxidative modification. This is Serum paraoxonase/arylesterase 1 (Pon1) from Mus musculus (Mouse).